The following is a 412-amino-acid chain: CinA-like protein (412 aa).

This sequence belongs to the CinA family.

This chain is CinA-like protein, found in Syntrophotalea carbinolica (strain DSM 2380 / NBRC 103641 / GraBd1) (Pelobacter carbinolicus).